A 273-amino-acid polypeptide reads, in one-letter code: Thiazole synthase (273 aa).

Catalysis depends on Lys-110, which acts as the Schiff-base intermediate with DXP. 1-deoxy-D-xylulose 5-phosphate is bound by residues Gly-171, 198-199 (AG), and 220-221 (NS).

The protein belongs to the ThiG family. Homotetramer. Forms heterodimers with either ThiH or ThiS.

The protein localises to the cytoplasm. It carries out the reaction [ThiS sulfur-carrier protein]-C-terminal-Gly-aminoethanethioate + 2-iminoacetate + 1-deoxy-D-xylulose 5-phosphate = [ThiS sulfur-carrier protein]-C-terminal Gly-Gly + 2-[(2R,5Z)-2-carboxy-4-methylthiazol-5(2H)-ylidene]ethyl phosphate + 2 H2O + H(+). It functions in the pathway cofactor biosynthesis; thiamine diphosphate biosynthesis. Functionally, catalyzes the rearrangement of 1-deoxy-D-xylulose 5-phosphate (DXP) to produce the thiazole phosphate moiety of thiamine. Sulfur is provided by the thiocarboxylate moiety of the carrier protein ThiS. In vitro, sulfur can be provided by H(2)S. This chain is Thiazole synthase, found in Hydrogenovibrio crunogenus (strain DSM 25203 / XCL-2) (Thiomicrospira crunogena).